A 53-amino-acid chain; its full sequence is Ovomucoid (53 aa).

The Kazal-like domain maps to Val3–Cys53. 3 disulfides stabilise this stretch: Cys5–Cys35, Cys13–Cys32, and Cys21–Cys53. The N-linked (GlcNAc...) asparagine glycan is linked to Asn42.

The protein resides in the secreted. This chain is Ovomucoid, found in Turnix sylvaticus (Common buttonquail).